Here is a 410-residue protein sequence, read N- to C-terminus: UBX domain-containing protein 3 (410 aa).

Disordered regions lie at residues 46-139 (EEDH…PDPK) and 154-212 (TISP…EKPL). Low complexity predominate over residues 65–85 (GSSSGISGGDQQPPRPLQRQQ). The segment covering 86–97 (NTQGQGMKSGTA) has biased composition (polar residues). Phosphoserine is present on residues Ser156, Ser167, and Ser186. Low complexity predominate over residues 163-174 (SGPSSLASSWAS). Positions 183–196 (NEASGSTTPVTQSG) are enriched in polar residues. A Phosphothreonine modification is found at Thr190. Positions 211-276 (PLRRTLYFWR…VQHRMDEDYV (66 aa)) constitute an SEP domain. In terms of domain architecture, UBX spans 334-410 (ENKPTTRIQV…KNASLVQKSL (77 aa)).

As to quaternary structure, interacts with cdc48.

Involved in CDC48-dependent protein degradation through the ubiquitin/proteasome pathway. Involved in delivery of substrates to the 26S proteasome. Also required for membrane fusion and sporulation. The protein is UBX domain-containing protein 3 (ubx3) of Schizosaccharomyces pombe (strain 972 / ATCC 24843) (Fission yeast).